The primary structure comprises 475 residues: Retrotransposon Gag-like protein 3 (475 aa).

2 stretches are compositionally biased toward basic and acidic residues: residues 51–66 and 78–87; these read LLRK…KLPE and KTPEFKEPQK. Disordered stretches follow at residues 51–101, 152–173, and 397–421; these read LLRK…EPPA, EPKN…APEY, and DPNP…ENQP. Residues 443–462 form a CCHC-type zinc finger; sequence RLCLYCGYPGHFARDCPVKP.

Its subcellular location is the nucleus. Its function is as follows. May function as a transcriptional regulator. Plays a role in postnatal myogenesis, may be involved in the regulation of satellite cells self-renewal. The chain is Retrotransposon Gag-like protein 3 from Homo sapiens (Human).